The sequence spans 336 residues: NmrA-like family domain-containing oxidoreductase FrzB (336 aa).

K135 serves as a coordination point for NADP(+).

Belongs to the NmrA-type oxidoreductase family.

The enzyme catalyses 4-{[(2S,5S)-5-[(4-hydroxyphenyl)methyl]-2,5-dihydropyrazin-2-yl]methyl}phenol + 2 NADPH + 2 H(+) = (S,S)-2,5-di-(p-hydroxybenzyl)piperazine + 2 NADP(+). It functions in the pathway secondary metabolite biosynthesis. Its function is as follows. NmrA-like family domain-containing oxidoreductase; part of the gene cluster that mediates the biosynthesis of the alkaloid (-)-FR901483, a potent immunosuppressant that shows efficacy in animal models and a probable inhibitor of purine nucleotide biosynthesis by targeting phosphoribosylpyrophosphate amidotransferase (PPAT). Within the pathway, FrzB catalyzes the reduction of 4-{[(2S,5S)-5-[(4-hydroxyphenyl)methyl]-2,5-dihydropyrazin-2-yl]methyl}phenol to produce the (S,S)-dityrosyl-piperazine intermediate. The biosynthesis of (-)-FR901483 starts with the condensation of two L-tyrosines to yield (S,S)-dityrosyl-piperazine. This process occurs in 3 steps with the non-canonical nonribosomal peptide synthetase FrzA catalyzing the reduction of L-tyrosine into L-tyrosinal, the spontaneous condensation of 2 L-tyrosinal units, and the subsequent reduction by the NmrA-like family domain-containing oxidoreductase FrzB. The cytochrome P450 monooxygenase FrzC then performs coupling between N10 and C1' to morph the piperazine into a 1,4-diazabicyclo[3.2.1]octane spiro-fused to a 2,5-cyclohexadienone. The dienone portion is further reduced to cyclohexanone by the flavin-dependent reductase FrzD. The methyltranserases (MTs) FrzE and FrzF are then involved in the methylation at the C10' amine and the C4 phenolic oxygen, respectively. The order of the two MTs appear to be interchangeable. Cleavage of the C9-N10' bond by the dioxygenase FrzG then leads to formation of a conjugated iminium. In addition to the oxidation of C9, an additional dehydrogenation between C7 and C8 can occur to give a likely shunt product. The next biosynthetic step is the intramolecular aldol condensation catalyzed by the newly identified aldolase FrzH to yield an aza-tricyclic product with the formation of a C9-C3' bond. The short-chain dehydrogenase/reductase FrzI then produces dephospho-(-)-FR901483 that is phosphorylated at C4'-OH into (-)-FR901483 by the phosphotransferase FrzJ. The protein is NmrA-like family domain-containing oxidoreductase FrzB of Cladobotryum sp.